Reading from the N-terminus, the 21-residue chain is Pedibin (21 aa).

Positions 1-21 (AGEDVSHELEEKEKALANHSE) are disordered.

Its function is as follows. Morphogenetically active peptide. Active in foot development. The chain is Pedibin from Hydra vulgaris (Hydra).